A 20-amino-acid chain; its full sequence is Transcriptional regulatory protein PufK (20 aa).

The segment covering 1–11 (MVPYRNPRHQH) has biased composition (basic residues). The segment at 1–20 (MVPYRNPRHQHVASVLRSGG) is disordered.

Its function is as follows. Involved in the transcriptional regulation of pufB. This Cereibacter sphaeroides (strain ATCC 17023 / DSM 158 / JCM 6121 / CCUG 31486 / LMG 2827 / NBRC 12203 / NCIMB 8253 / ATH 2.4.1.) (Rhodobacter sphaeroides) protein is Transcriptional regulatory protein PufK (pufK).